We begin with the raw amino-acid sequence, 97 residues long: Co-chaperonin GroES (97 aa).

This sequence belongs to the GroES chaperonin family. Heptamer of 7 subunits arranged in a ring. Interacts with the chaperonin GroEL.

The protein resides in the cytoplasm. In terms of biological role, together with the chaperonin GroEL, plays an essential role in assisting protein folding. The GroEL-GroES system forms a nano-cage that allows encapsulation of the non-native substrate proteins and provides a physical environment optimized to promote and accelerate protein folding. GroES binds to the apical surface of the GroEL ring, thereby capping the opening of the GroEL channel. The polypeptide is Co-chaperonin GroES (Wigglesworthia glossinidia brevipalpis).